The chain runs to 404 residues: Cysteine desulfurase IscS (404 aa).

Pyridoxal 5'-phosphate contacts are provided by residues 75–76 (AT), Asn155, Gln183, and 203–205 (SAH). Lys206 carries the post-translational modification N6-(pyridoxal phosphate)lysine. Residue Thr243 participates in pyridoxal 5'-phosphate binding. The active-site Cysteine persulfide intermediate is Cys328. [2Fe-2S] cluster is bound at residue Cys328.

Belongs to the class-V pyridoxal-phosphate-dependent aminotransferase family. NifS/IscS subfamily. In terms of assembly, homodimer. Forms a heterotetramer with IscU, interacts with other sulfur acceptors. Pyridoxal 5'-phosphate is required as a cofactor.

It is found in the cytoplasm. The catalysed reaction is (sulfur carrier)-H + L-cysteine = (sulfur carrier)-SH + L-alanine. The protein operates within cofactor biosynthesis; iron-sulfur cluster biosynthesis. Its function is as follows. Master enzyme that delivers sulfur to a number of partners involved in Fe-S cluster assembly, tRNA modification or cofactor biosynthesis. Catalyzes the removal of elemental sulfur atoms from cysteine to produce alanine. Functions as a sulfur delivery protein for Fe-S cluster synthesis onto IscU, an Fe-S scaffold assembly protein, as well as other S acceptor proteins. The chain is Cysteine desulfurase IscS from Shewanella loihica (strain ATCC BAA-1088 / PV-4).